The following is a 176-amino-acid chain: Inorganic pyrophosphatase (176 aa).

Residues Lys-30, Arg-44, and Tyr-56 each contribute to the substrate site. Asp-66, Asp-71, and Asp-103 together coordinate Mg(2+). Residue Tyr-140 participates in substrate binding.

Belongs to the PPase family. As to quaternary structure, homohexamer. Mg(2+) is required as a cofactor.

It localises to the cytoplasm. The catalysed reaction is diphosphate + H2O = 2 phosphate + H(+). Functionally, catalyzes the hydrolysis of inorganic pyrophosphate (PPi) forming two phosphate ions. In Methanothermobacter thermautotrophicus (strain ATCC 29096 / DSM 1053 / JCM 10044 / NBRC 100330 / Delta H) (Methanobacterium thermoautotrophicum), this protein is Inorganic pyrophosphatase.